We begin with the raw amino-acid sequence, 338 residues long: Peptidyl-prolyl cis-trans isomerase cyp11 (338 aa).

Residues 7 to 172 (FFDIDVDGNR…HNVMIANCGE (166 aa)) form the PPIase cyclophilin-type domain. The segment at 186–338 (ASAVSDESED…RGRFKYRPTY (153 aa)) is disordered. Residues 208–218 (DDSSSDEDSEE) show a composition bias toward acidic residues. The span at 223-242 (RTKKKRSRKHSKKDKKKKKR) shows a compositional bias: basic residues. Basic and acidic residues predominate over residues 243–309 (ESSNRKRSPE…PEKRSSERRV (67 aa)). The segment covering 329–338 (RGRFKYRPTY) has biased composition (basic residues).

The protein belongs to the cyclophilin-type PPIase family.

It catalyses the reaction [protein]-peptidylproline (omega=180) = [protein]-peptidylproline (omega=0). In terms of biological role, PPIases accelerate the folding of proteins. It catalyzes the cis-trans isomerization of proline imidic peptide bonds in oligopeptides. This is Peptidyl-prolyl cis-trans isomerase cyp11 (cyp11) from Rhizopus delemar (strain RA 99-880 / ATCC MYA-4621 / FGSC 9543 / NRRL 43880) (Mucormycosis agent).